A 340-amino-acid polypeptide reads, in one-letter code: GTP 3',8-cyclase (340 aa).

Positions 8–227 (KLGRPIRDLR…TMIEQHFEID (220 aa)) constitute a Radical SAM core domain. Arginine 17 contacts GTP. [4Fe-4S] cluster-binding residues include cysteine 24 and cysteine 28. S-adenosyl-L-methionine is bound at residue tyrosine 30. Residue cysteine 31 participates in [4Fe-4S] cluster binding. Arginine 71 provides a ligand contact to GTP. Residue glycine 75 coordinates S-adenosyl-L-methionine. A GTP-binding site is contributed by threonine 102. Serine 126 is an S-adenosyl-L-methionine binding site. Lysine 163 is a GTP binding site. Methionine 197 contributes to the S-adenosyl-L-methionine binding site. Residues cysteine 261 and cysteine 264 each coordinate [4Fe-4S] cluster. 266-268 (RAR) contacts GTP. Cysteine 278 lines the [4Fe-4S] cluster pocket.

This sequence belongs to the radical SAM superfamily. MoaA family. In terms of assembly, monomer and homodimer. [4Fe-4S] cluster is required as a cofactor.

It catalyses the reaction GTP + AH2 + S-adenosyl-L-methionine = (8S)-3',8-cyclo-7,8-dihydroguanosine 5'-triphosphate + 5'-deoxyadenosine + L-methionine + A + H(+). The protein operates within cofactor biosynthesis; molybdopterin biosynthesis. Catalyzes the cyclization of GTP to (8S)-3',8-cyclo-7,8-dihydroguanosine 5'-triphosphate. The sequence is that of GTP 3',8-cyclase from Staphylococcus aureus (strain MRSA252).